We begin with the raw amino-acid sequence, 480 residues long: Gamma-aminobutyric acid receptor subunit rho-1 (480 aa).

Positions 1 to 21 (MLAVRNMKFGIFLLWWGWVLA) are cleaved as a signal peptide. Residues 22–281 (AESTVHWPGR…LYINFTLRRH (260 aa)) are Extracellular-facing. The disordered stretch occupies residues 31-67 (REVHEPSKKGSRPQRQRRGAHDDAHKQGSPILKRSSD). Positions 39-48 (KGSRPQRQRR) are enriched in basic residues. Arg126 is a binding site for 4-aminobutanoate. N-linked (GlcNAc...) asparagine glycosylation is present at Asn141. Ser190 lines the 4-aminobutanoate pocket. Residues Cys199 and Cys213 are joined by a disulfide bond. Glu218 provides a ligand contact to 4-aminobutanoate. 2 N-linked (GlcNAc...) asparagine glycosylation sites follow: Asn235 and Asn275. A helical transmembrane segment spans residues 282 to 302 (IFFFLLQTYFPATLMVMLSWV). Residues 303-314 (SFWIDRRAVPAR) lie on the Cytoplasmic side of the membrane. A helical membrane pass occupies residues 315–335 (VPLGITTVLTMSTIITGVNAS). Residues 336-346 (MPRVSYIKAVD) lie on the Extracellular side of the membrane. Residues 347 to 367 (IYLWVSFVFVFLSVLEYAAVN) form a helical membrane-spanning segment. Over 368 to 458 (YLTTVQERKE…MRINTHAIDK (91 aa)) the chain is Cytoplasmic. A helical membrane pass occupies residues 459–479 (YSRIIFPAAYILFNLIYWSIF). A topological domain (extracellular) is located at residue Ser480.

It belongs to the ligand-gated ion channel (TC 1.A.9) family. Gamma-aminobutyric acid receptor (TC 1.A.9.5) subfamily. GABRR1 sub-subfamily. Three rho subunits (rho-1/GBRR1, rho-2/GBRR2 and rho-3/GBRR3) coassemble either to form functional homopentamers or heteropentamers. Rho-1/GBRR1 subunits can also associate with alpha-1/GBRA1 subunits to form a functional GABAAR. Interacts with SQSTM1.

The protein localises to the postsynaptic cell membrane. It localises to the cell membrane. The enzyme catalyses chloride(in) = chloride(out). Inhibited by TPMPA, a rho-specific antagonist. Inhibited by picrotoxin, when forming a homopentamer. In contrast with other GABAARs, rho-1 GABAAR is not inhibited by bicuculline, when forming a homopentamer. Down-regulated by external protons when forming a homopentamer. Its function is as follows. Rho subunit of the pentameric ligand-gated chloride channels responsible for mediating the effects of gamma-aminobutyric acid (GABA), the major inhibitory neurotransmitter in the brain. Rho-containing GABA-gated chloride channels are a subclass of GABA(A) receptors (GABAARs) entirely composed of rho subunits, where GABA molecules bind at the rho intersubunit interfaces. When activated by GABA, rho-GABAARs selectively allow the flow of chloride anions across the cell membrane down their electrochemical gradient. Rho-1 subunits are primarily expressed in retina where rho-1-containing GABAARs may play a role in retinal neurotransmission. Rho-1 GABAARs are also involved in neuronal tonic (extrasynaptic) and phasic (synaptic) transmission in the Purkinje neurons of the cerebellum. Rho-1 GABAARs may also contribute to the regulation of glial development in the cerebellum by controlling extrasynaptic transmission. The protein is Gamma-aminobutyric acid receptor subunit rho-1 of Rattus norvegicus (Rat).